The following is a 261-amino-acid chain: GTP cyclohydrolase FolE2 (261 aa).

This sequence belongs to the GTP cyclohydrolase IV family.

It catalyses the reaction GTP + H2O = 7,8-dihydroneopterin 3'-triphosphate + formate + H(+). It participates in cofactor biosynthesis; 7,8-dihydroneopterin triphosphate biosynthesis; 7,8-dihydroneopterin triphosphate from GTP: step 1/1. Its function is as follows. Converts GTP to 7,8-dihydroneopterin triphosphate. The sequence is that of GTP cyclohydrolase FolE2 from Fervidobacterium nodosum (strain ATCC 35602 / DSM 5306 / Rt17-B1).